We begin with the raw amino-acid sequence, 534 residues long: MDLGKTVEYGTHRQDAIAQIDVPDQVLYTIGSFILIIGSVGIIGNMLVLYAFYRNKKLRTAPNYFIINLAISDFLMSATQAPVCFLSSLHREWILGDIGCNVYAFCGALFGITSMMTLLAISINRYIVITKPLQSIQWSSKKRTSQIIVLVWMYSLMWSLAPLLGWSSYVPEGLRISCTWDYVTSTMSNRSYTMMLCCCVFFIPLIVISHCYLFMFLAIRSTGRNVQKLGSYGRQSFLSQSMKNEWKMAKIAFVIIIVFVLSWSPYACVTLIAWAGHGKSLTPYSKTVPAVIAKASAIYNPIIYGIIHPKYRETIHKTVPCLRFLIREPKKDIFESSVRGSIYGRQSASRKKNSFISTVSTAETVSSHIWDNTPNGHWDRKSLSQTMSNLCSPLLQDPNSSHTLEQTLTWPDDPSPKEILLPSSLKSVTYPIGLESIVKDEHTNNSCVRNHRVDKSGGLDWIINATLPRIVIIPTSESNISETKEEHDNNSEEKSKRTEEEEDFFNFHVDTSLLNLEGLNSSTDLYEVVERFLS.

Residues 1–32 (MDLGKTVEYGTHRQDAIAQIDVPDQVLYTIGS) lie on the Extracellular side of the membrane. Residues 33–53 (FILIIGSVGIIGNMLVLYAFY) form a helical membrane-spanning segment. At 54 to 64 (RNKKLRTAPNY) the chain is on the cytoplasmic side. The helical transmembrane segment at 65–85 (FIINLAISDFLMSATQAPVCF) threads the bilayer. The Extracellular segment spans residues 86–102 (LSSLHREWILGDIGCNV). The cysteines at positions 100 and 178 are disulfide-linked. The helical transmembrane segment at 103-123 (YAFCGALFGITSMMTLLAISI) threads the bilayer. Over 124 to 146 (NRYIVITKPLQSIQWSSKKRTSQ) the chain is Cytoplasmic. Residues 147-167 (IIVLVWMYSLMWSLAPLLGWS) traverse the membrane as a helical segment. The Extracellular segment spans residues 168–198 (SYVPEGLRISCTWDYVTSTMSNRSYTMMLCC). A glycan (N-linked (GlcNAc...) asparagine) is linked at Asn-189. A helical transmembrane segment spans residues 199–219 (CVFFIPLIVISHCYLFMFLAI). The Cytoplasmic segment spans residues 220 to 250 (RSTGRNVQKLGSYGRQSFLSQSMKNEWKMAK). Residues 251–271 (IAFVIIIVFVLSWSPYACVTL) form a helical membrane-spanning segment. Topologically, residues 272-286 (IAWAGHGKSLTPYSK) are extracellular. Residues 287-307 (TVPAVIAKASAIYNPIIYGII) form a helical membrane-spanning segment. Lys-294 is modified (N6-(retinylidene)lysine). The Cytoplasmic portion of the chain corresponds to 308 to 534 (HPKYRETIHK…LYEVVERFLS (227 aa)). Residues 478–501 (SNISETKEEHDNNSEEKSKRTEEE) are disordered. The segment covering 482-499 (ETKEEHDNNSEEKSKRTE) has biased composition (basic and acidic residues).

This sequence belongs to the G-protein coupled receptor 1 family. Opsin subfamily. As to expression, highest level in the iris, high level in the inner nuclear layer, possibly in horizontal cells, and lowest level in retinal pigment epithelium. Expressed in melanophore cells of the skin.

It localises to the cell membrane. Photoreceptor implicated in non-image-forming responses to light. May be able to isomerize covalently bound all-trans retinal back to 11-cis retinal. This is Melanopsin-B from Xenopus laevis (African clawed frog).